Here is a 495-residue protein sequence, read N- to C-terminus: Glycerol kinase (495 aa).

An ADP-binding site is contributed by T13. Residues T13, T14, and S15 each coordinate ATP. T13 is a binding site for sn-glycerol 3-phosphate. Residue R17 participates in ADP binding. Sn-glycerol 3-phosphate contacts are provided by R83, E84, Y135, and D244. Glycerol contacts are provided by R83, E84, Y135, D244, and Q245. The ADP site is built by T266 and G309. T266, G309, Q313, and G410 together coordinate ATP. ADP contacts are provided by G410 and N414.

This sequence belongs to the FGGY kinase family.

It carries out the reaction glycerol + ATP = sn-glycerol 3-phosphate + ADP + H(+). It participates in polyol metabolism; glycerol degradation via glycerol kinase pathway; sn-glycerol 3-phosphate from glycerol: step 1/1. Inhibited by fructose 1,6-bisphosphate (FBP). Key enzyme in the regulation of glycerol uptake and metabolism. Catalyzes the phosphorylation of glycerol to yield sn-glycerol 3-phosphate. The sequence is that of Glycerol kinase from Shewanella sediminis (strain HAW-EB3).